Here is a 962-residue protein sequence, read N- to C-terminus: Glycine dehydrogenase (decarboxylating) (962 aa).

An N6-(pyridoxal phosphate)lysine modification is found at Lys-709.

It belongs to the GcvP family. As to quaternary structure, the glycine cleavage system is composed of four proteins: P, T, L and H. Pyridoxal 5'-phosphate serves as cofactor.

The enzyme catalyses N(6)-[(R)-lipoyl]-L-lysyl-[glycine-cleavage complex H protein] + glycine + H(+) = N(6)-[(R)-S(8)-aminomethyldihydrolipoyl]-L-lysyl-[glycine-cleavage complex H protein] + CO2. Its function is as follows. The glycine cleavage system catalyzes the degradation of glycine. The P protein binds the alpha-amino group of glycine through its pyridoxal phosphate cofactor; CO(2) is released and the remaining methylamine moiety is then transferred to the lipoamide cofactor of the H protein. This chain is Glycine dehydrogenase (decarboxylating), found in Shewanella loihica (strain ATCC BAA-1088 / PV-4).